The chain runs to 285 residues: Protease HtpX homolog (285 aa).

Helical transmembrane passes span 7-27 (TAMLMAAITALFIVIGGMIGG) and 30-50 (GMTIALLFALGMNFFSYWFSD). Residue H131 participates in Zn(2+) binding. E132 is a catalytic residue. H135 contributes to the Zn(2+) binding site. Transmembrane regions (helical) follow at residues 146–166 (ITATMAGAISAIANFAMFFGG) and 177–197 (IAGIAVALLAPIAGALIQMAI). E202 is a binding site for Zn(2+).

The protein belongs to the peptidase M48B family. Zn(2+) is required as a cofactor.

The protein resides in the cell inner membrane. The chain is Protease HtpX homolog from Burkholderia lata (strain ATCC 17760 / DSM 23089 / LMG 22485 / NCIMB 9086 / R18194 / 383).